A 119-amino-acid chain; its full sequence is Large ribosomal subunit protein bL20 (119 aa).

Belongs to the bacterial ribosomal protein bL20 family.

Binds directly to 23S ribosomal RNA and is necessary for the in vitro assembly process of the 50S ribosomal subunit. It is not involved in the protein synthesizing functions of that subunit. This chain is Large ribosomal subunit protein bL20, found in Clostridium novyi (strain NT).